A 505-amino-acid polypeptide reads, in one-letter code: N-succinylglutamate 5-semialdehyde dehydrogenase (505 aa).

234 to 239 (GSAHTG) is a binding site for NAD(+). Active-site residues include Glu257 and Cys291.

The protein belongs to the aldehyde dehydrogenase family. AstD subfamily.

It catalyses the reaction N-succinyl-L-glutamate 5-semialdehyde + NAD(+) + H2O = N-succinyl-L-glutamate + NADH + 2 H(+). It functions in the pathway amino-acid degradation; L-arginine degradation via AST pathway; L-glutamate and succinate from L-arginine: step 4/5. Catalyzes the NAD-dependent reduction of succinylglutamate semialdehyde into succinylglutamate. This chain is N-succinylglutamate 5-semialdehyde dehydrogenase, found in Yersinia pseudotuberculosis serotype IB (strain PB1/+).